The chain runs to 504 residues: Peroxisome proliferator-activated receptor gamma (504 aa).

Ser111 carries the post-translational modification Phosphoserine; by MAPK. Positions 135–209 (AIECRVCGDK…VGMSHNAIRF (75 aa)) form a DNA-binding region, nuclear receptor. 2 consecutive NR C4-type zinc fingers follow at residues 138-158 (CRVC…CEGC) and 175-197 (CDLN…FQKC). The interval 204–279 (HNAIRFGRMP…DKSPFVIYDM (76 aa)) is interaction with FAM120B. Positions 237–502 (DLRALAKHLY…HPLLQEIYKD (266 aa)) constitute an NR LBD domain. Lys251 is covalently cross-linked (Glycyl lysine isopeptide (Lys-Gly) (interchain with G-Cter in ubiquitin)). The 9aaTAD signature appears at 494–502 (PLLQEIYKD).

This sequence belongs to the nuclear hormone receptor family. NR1 subfamily. In terms of assembly, interacts with FOXO1 (acetylated form). Heterodimer with other nuclear receptors, such as RXRA. The heterodimer with the retinoic acid receptor RXRA is called adipocyte-specific transcription factor ARF6. Interacts with NCOA6 coactivator, leading to a strong increase in transcription of target genes. Interacts with coactivator PPARBP, leading to a mild increase in transcription of target genes. Interacts with NOCA7 in a ligand-inducible manner. Interacts with NCOA1 and NCOA2 LXXLL motifs. Interacts with ASXL1, ASXL2, DNTTIP2, FAM120B, MAP2K1/MEK1, NR0B2, PDPK1, PRDM16, PRMT2 and TGFB1I1. Interacts (when activated by agonist) with PPP5C. Interacts with HELZ2 and THRAP3; the interaction stimulates the transcriptional activity of PPARG. Interacts with PER2, the interaction is ligand dependent and blocks PPARG recruitment to target promoters. Interacts with NOCT. Interacts with ACTN4. Interacts (when in the liganded conformation) with GPS2. Interacts with CRY1 and CRY2 in a ligand-dependent manner. In the absence of hormonal ligand, interacts with TACC1. In macrophages, interacts with PAQR3 and STUB1; the interactions promote PPARG poylubiquitination and STUB1-mediated degradation. Phosphorylated at basal conditions and dephosphorylated when treated with the ligand. May be dephosphorylated by PPP5C. The phosphorylated form may be inactive and dephosphorylation induces adipogenic activity. Post-translationally, ubiquitinated by E3 ubiquitin-protein ligase complex containing FBXO9; leading to proteasomal degradation. Ubiquitinated at Lys-251 by TRIM55 leading to proteasomal degradation. Ubiquitinated by E3 ubiquitin-protein ligase STUB1/CHIP; leading to proteasomal degradation. Highest expression in adipose tissue and lower in spleen. Very low levels in kidney, intestine, lung and muscle.

It is found in the nucleus. The protein localises to the cytoplasm. With respect to regulation, PDPK1 activates its transcriptional activity independently of its kinase activity. In terms of biological role, nuclear receptor that binds peroxisome proliferators such as hypolipidemic drugs and fatty acids. Once activated by a ligand, the nuclear receptor binds to DNA specific PPAR response elements (PPRE) and modulates the transcription of its target genes, such as acyl-CoA oxidase. It therefore controls the peroxisomal beta-oxidation pathway of fatty acids. Key regulator of adipocyte differentiation and glucose homeostasis. ARF6 acts as a key regulator of the tissue-specific adipocyte P2 (aP2) enhancer. Acts as a critical regulator of gut homeostasis by suppressing NF-kappa-B-mediated pro-inflammatory responses. Plays a role in the regulation of cardiovascular circadian rhythms by regulating the transcription of BMAL1 in the blood vessels. This Sus scrofa (Pig) protein is Peroxisome proliferator-activated receptor gamma (PPARG).